The sequence spans 232 residues: Flagellar L-ring protein (232 aa).

A signal peptide spans Met-1–Gly-21. Cys-22 is lipidated: N-palmitoyl cysteine. Residue Cys-22 is the site of S-diacylglycerol cysteine attachment.

This sequence belongs to the FlgH family. The basal body constitutes a major portion of the flagellar organelle and consists of four rings (L,P,S, and M) mounted on a central rod.

It is found in the cell outer membrane. The protein localises to the bacterial flagellum basal body. Functionally, assembles around the rod to form the L-ring and probably protects the motor/basal body from shearing forces during rotation. In Shigella boydii serotype 18 (strain CDC 3083-94 / BS512), this protein is Flagellar L-ring protein.